Reading from the N-terminus, the 443-residue chain is ATP-dependent protease ATPase subunit HslU (443 aa).

Residues Ile18, 60–65, Asp256, Glu321, and Arg393 each bind ATP; that span reads GVGKTE.

Belongs to the ClpX chaperone family. HslU subfamily. In terms of assembly, a double ring-shaped homohexamer of HslV is capped on each side by a ring-shaped HslU homohexamer. The assembly of the HslU/HslV complex is dependent on binding of ATP.

The protein localises to the cytoplasm. In terms of biological role, ATPase subunit of a proteasome-like degradation complex; this subunit has chaperone activity. The binding of ATP and its subsequent hydrolysis by HslU are essential for unfolding of protein substrates subsequently hydrolyzed by HslV. HslU recognizes the N-terminal part of its protein substrates and unfolds these before they are guided to HslV for hydrolysis. This Pectobacterium atrosepticum (strain SCRI 1043 / ATCC BAA-672) (Erwinia carotovora subsp. atroseptica) protein is ATP-dependent protease ATPase subunit HslU.